The sequence spans 521 residues: Nitric oxide reductase transcription regulator NorR2 (521 aa).

At Asp56 the chain carries 4-aspartylphosphate. The Sigma-54 factor interaction domain occupies 193-422 (IIGQSEAIAN…LEHVISRAAL (230 aa)). Residues 221–228 (GETGVGKE) and 293–302 (EVGELPLAIQ) contribute to the ATP site. The segment at residues 497–516 (WAQAARQLGIDASNLHKLAR) is a DNA-binding region (H-T-H motif).

It participates in nitrogen metabolism; nitrate reduction (denitrification) [regulation]. Its function is as follows. Required for the nitric oxide (NO) induced expression of NO reductase. Not required for expression of 2 other pathway members, nitrate reductase (nirS) and nitrous oxide reductase (nosZ). The sequence is that of Nitric oxide reductase transcription regulator NorR2 (norR2) from Cupriavidus necator (strain ATCC 17699 / DSM 428 / KCTC 22496 / NCIMB 10442 / H16 / Stanier 337) (Ralstonia eutropha).